Here is an 86-residue protein sequence, read N- to C-terminus: MAEKRKYSRKYCKYTEAKVDFIDYKDTALLKHALSERFKIMPRRLTGTSKKHQEMVEIAIKRARHVALIPYIVDRKEVVTNPFEGL.

This sequence belongs to the bacterial ribosomal protein bS18 family. In terms of assembly, part of the 30S ribosomal subunit. Forms a tight heterodimer with protein bS6.

Functionally, binds as a heterodimer with protein bS6 to the central domain of the 16S rRNA, where it helps stabilize the platform of the 30S subunit. The chain is Small ribosomal subunit protein bS18 from Campylobacter lari (strain RM2100 / D67 / ATCC BAA-1060).